The sequence spans 720 residues: Fatty acid CoA ligase Acsl3 (720 aa).

A helical; Signal-anchor for type III membrane protein transmembrane segment spans residues 21 to 41 (ILLYFIHFLISLYTILTYIPF). Residues 42-720 (YFFSESRQEK…ADIERMYGRK (679 aa)) are Cytoplasmic-facing. Phosphoserine is present on S683.

Belongs to the ATP-dependent AMP-binding enzyme family. The cofactor is Mg(2+).

The protein localises to the mitochondrion outer membrane. It is found in the peroxisome membrane. It localises to the microsome membrane. Its subcellular location is the endoplasmic reticulum membrane. It catalyses the reaction a long-chain fatty acid + ATP + CoA = a long-chain fatty acyl-CoA + AMP + diphosphate. The catalysed reaction is (5Z,8Z,11Z,14Z)-eicosatetraenoate + ATP + CoA = (5Z,8Z,11Z,14Z)-eicosatetraenoyl-CoA + AMP + diphosphate. The enzyme catalyses (E)-hexadec-2-enoate + ATP + CoA = (2E)-hexadecenoyl-CoA + AMP + diphosphate. It carries out the reaction 15-hydroxy-(5Z,8Z,11Z,13E)-eicosatetraenoate + ATP + CoA = 15-hydroxy-(5Z,8Z,11Z,13E)-eicosatetraenoyl-CoA + AMP + diphosphate. It catalyses the reaction 12-hydroxy-(5Z,8Z,10E,14Z)-eicosatetraenoate + ATP + CoA = 12-hydroxy-(5Z,8Z,10E,14Z)-eicosatetraenoyl-CoA + AMP + diphosphate. The catalysed reaction is 5-hydroxy-(6E,8Z,11Z,14Z)-eicosatetraenoate + ATP + CoA = 5-hydroxy-(6E,8Z,11Z,14Z)-eicosatetraenoyl-CoA + AMP + diphosphate. The enzyme catalyses 14,15-epoxy-(5Z,8Z,11Z)-eicosatrienoate + ATP + CoA = 14,15-epoxy-(5Z,8Z,11Z)-eicosatrienoyl-CoA + AMP + diphosphate. It carries out the reaction 11,12-epoxy-(5Z,8Z,14Z)-eicosatrienoate + ATP + CoA = 11,12-epoxy-(5Z,8Z,14Z)-eicosatrienoyl-CoA + AMP + diphosphate. It catalyses the reaction a medium-chain fatty acid + ATP + CoA = a medium-chain fatty acyl-CoA + AMP + diphosphate. The catalysed reaction is hexadecanoate + ATP + CoA = hexadecanoyl-CoA + AMP + diphosphate. The enzyme catalyses tetradecanoate + ATP + CoA = tetradecanoyl-CoA + AMP + diphosphate. It carries out the reaction dodecanoate + ATP + CoA = dodecanoyl-CoA + AMP + diphosphate. It catalyses the reaction octadecanoate + ATP + CoA = octadecanoyl-CoA + AMP + diphosphate. The catalysed reaction is eicosanoate + ATP + CoA = eicosanoyl-CoA + AMP + diphosphate. The enzyme catalyses (9Z)-octadecenoate + ATP + CoA = (9Z)-octadecenoyl-CoA + AMP + diphosphate. It carries out the reaction (9Z)-hexadecenoate + ATP + CoA = (9Z)-hexadecenoyl-CoA + AMP + diphosphate. It catalyses the reaction (9Z,12Z)-octadecadienoate + ATP + CoA = (9Z,12Z)-octadecadienoyl-CoA + AMP + diphosphate. The catalysed reaction is (9Z,12Z,15Z)-octadecatrienoate + ATP + CoA = (9Z,12Z,15Z)-octadecatrienoyl-CoA + AMP + diphosphate. The enzyme catalyses (4Z,7Z,10Z,13Z,16Z,19Z)-docosahexaenoate + ATP + CoA = (4Z,7Z,10Z,13Z,16Z,19Z)-docosahexaenoyl-CoA + AMP + diphosphate. It carries out the reaction (5Z,8Z,11Z,14Z,17Z)-eicosapentaenoate + ATP + CoA = (5Z,8Z,11Z,14Z,17Z)-eicosapentaenoyl-CoA + AMP + diphosphate. It catalyses the reaction a fatty acid + ATP + CoA = a fatty acyl-CoA + AMP + diphosphate. Functionally, acyl-CoA synthetases (ACSL) activates long-chain fatty acids for both synthesis of cellular lipids, and degradation via beta-oxidation. Required for the incorporation of fatty acids into phosphatidylcholine, the major phospholipid located on the surface of VLDL (very low density lipoproteins). Has mainly an anabolic role in energy metabolism. Mediates hepatic lipogenesis. Preferentially uses myristate, laurate, arachidonate and eicosapentaenoate as substrates. Both isoforms exhibit the same level of activity. The sequence is that of Fatty acid CoA ligase Acsl3 from Homo sapiens (Human).